The primary structure comprises 298 residues: DNA-3-methyladenine glycosylase (298 aa).

The N-terminal 17 residues, 1-17 (MVTPALQMKKPKQFCRR), are a transit peptide targeting the mitochondrion. The segment at 1–65 (MVTPALQMKK…CPRERCLGPP (65 aa)) is disordered. Positions 9–25 (KKPKQFCRRMGQKKQRP) are enriched in basic residues. Phosphoserine occurs at positions 78 and 252.

The protein belongs to the DNA glycosylase MPG family. As to quaternary structure, binds MBD1. Binds SSBP1.

It is found in the cytoplasm. Its subcellular location is the mitochondrion matrix. The protein resides in the mitochondrion nucleoid. It localises to the nucleus. It catalyses the reaction Hydrolysis of alkylated DNA, releasing 3-methyladenine, 3-methylguanine, 7-methylguanine and 7-methyladenine.. Binding to SSBP1 in mitochondria inhibits glycosylase activity in the context of a single-stranded DNA (ssDNA), but not a double-stranded DNA (dsDNA) substrates. Its function is as follows. Hydrolysis of the deoxyribose N-glycosidic bond to excise 3-methyladenine, and 7-methylguanine from the damaged DNA polymer formed by alkylation lesions. This chain is DNA-3-methyladenine glycosylase (MPG), found in Homo sapiens (Human).